We begin with the raw amino-acid sequence, 298 residues long: Chromatin modification-related protein YNG2 (298 aa).

The stretch at 20–86 (EVRHLLEEIK…KLVQKLQKEK (67 aa)) forms a coiled coil. A compositionally biased stretch (polar residues) spans 140–158 (GFSDSASATPTPRNGSSAT). The interval 140 to 206 (GFSDSASATP…EEIEDPLPYE (67 aa)) is disordered. A compositionally biased stretch (low complexity) spans 174-188 (VKGASSSSAQSSSAS). The PHD-type zinc-finger motif lies at 237–288 (NLYCFCQRVSFGEMIGCDNEDCKYEWFHWSCVGITSPPKDDEIWYCPDCASK). Cysteine 240, cysteine 242, cysteine 253, cysteine 258, histidine 264, cysteine 267, cysteine 282, and cysteine 285 together coordinate Zn(2+).

It belongs to the ING family. As to quaternary structure, interacts with H3K4me3 and to a lesser extent with H3K4me2. Component of the NuA4 histone acetyltransferase complex.

The protein resides in the nucleus. In terms of biological role, component of the NuA4 histone acetyltransferase complex which is involved in transcriptional activation of selected genes principally by acetylation of nucleosomal histone H4 and H2A. The NuA4 complex is also involved in DNA repair. Involved in cell cycle progression and meiosis. In Candida albicans (strain SC5314 / ATCC MYA-2876) (Yeast), this protein is Chromatin modification-related protein YNG2 (YNG2).